Reading from the N-terminus, the 396-residue chain is Dihydrolipoyllysine-residue acetyltransferase component of pyruvate dehydrogenase complex (396 aa).

The 69-residue stretch at 1 to 69 folds into the Lipoyl-binding domain; sequence MPDIGLEEVE…KTDALIMRCE (69 aa). Position 35 is an N6-lipoyllysine (Lys-35). The 38-residue stretch at 104–141 folds into the Peripheral subunit-binding (PSBD) domain; sequence HATPLIRRLARNLNINLYDVVGTGPKNRILKEDLDLYQ. The active site involves His-369.

Belongs to the 2-oxoacid dehydrogenase family. Forms a 24-polypeptide structural core with octahedral symmetry. (R)-lipoate serves as cofactor.

The enzyme catalyses N(6)-[(R)-dihydrolipoyl]-L-lysyl-[protein] + acetyl-CoA = N(6)-[(R)-S(8)-acetyldihydrolipoyl]-L-lysyl-[protein] + CoA. In terms of biological role, the pyruvate dehydrogenase complex catalyzes the overall conversion of pyruvate to acetyl-CoA and CO(2). It contains multiple copies of three enzymatic components: pyruvate dehydrogenase (E1), dihydrolipoamide acetyltransferase (E2) and lipoamide dehydrogenase (E3). The chain is Dihydrolipoyllysine-residue acetyltransferase component of pyruvate dehydrogenase complex (aceF) from Buchnera aphidicola subsp. Acyrthosiphon pisum (strain APS) (Acyrthosiphon pisum symbiotic bacterium).